The sequence spans 70 residues: Sec-independent protein translocase protein TatA (70 aa).

Residues 1–21 (MGIGVWELLLLFLIVLVVFGT) traverse the membrane as a helical segment. The segment at 42–70 (MSENEDKPSEGGARTLEGEVVDKKEKDKV) is disordered. Over residues 57 to 70 (LEGEVVDKKEKDKV) the composition is skewed to basic and acidic residues.

This sequence belongs to the TatA/E family. As to quaternary structure, the Tat system comprises two distinct complexes: a TatABC complex, containing multiple copies of TatA, TatB and TatC subunits, and a separate TatA complex, containing only TatA subunits. Substrates initially bind to the TatABC complex, which probably triggers association of the separate TatA complex to form the active translocon.

The protein localises to the cell inner membrane. Part of the twin-arginine translocation (Tat) system that transports large folded proteins containing a characteristic twin-arginine motif in their signal peptide across membranes. TatA could form the protein-conducting channel of the Tat system. The protein is Sec-independent protein translocase protein TatA of Methylococcus capsulatus (strain ATCC 33009 / NCIMB 11132 / Bath).